Here is a 312-residue protein sequence, read N- to C-terminus: Small ribosomal subunit protein RACK1 (312 aa).

WD repeat units follow at residues 9-42 (GHRG…ISWK), 63-93 (GHTG…RMWD), 105-135 (KHTK…RVWN), 148-180 (GHED…KVWN), 192-222 (GHSN…LLWD), 233-262 (NVES…SVYD), and 279-307 (PSEC…RVWS).

It belongs to the WD repeat G protein beta family. Ribosomal protein RACK1 subfamily.

This Leishmania chagasi protein is Small ribosomal subunit protein RACK1.